We begin with the raw amino-acid sequence, 878 residues long: Pyruvate dehydrogenase phosphatase regulatory subunit, mitochondrial (878 aa).

A mitochondrion-targeting transit peptide spans 1 to 93 (MLYRLLSIVQ…CAGILSTARH (93 aa)).

Belongs to the GcvT family. As to quaternary structure, heterodimer of a catalytic (PDP1) and a regulatory (PDPR) subunit.

The protein resides in the mitochondrion matrix. In terms of biological role, decreases the sensitivity of PDP1 to magnesium ions, and this inhibition is reversed by the polyamine spermine. The polypeptide is Pyruvate dehydrogenase phosphatase regulatory subunit, mitochondrial (Pdpr) (Mus musculus (Mouse)).